The primary structure comprises 431 residues: Glutamyl-tRNA(Gln) amidotransferase subunit A (431 aa).

Active-site charge relay system residues include lysine 55 and serine 130. Serine 154 (acyl-ester intermediate) is an active-site residue.

Belongs to the amidase family. GatA subfamily. Heterotrimer of A, B and C subunits.

The catalysed reaction is L-glutamyl-tRNA(Gln) + L-glutamine + ATP + H2O = L-glutaminyl-tRNA(Gln) + L-glutamate + ADP + phosphate + H(+). Functionally, allows the formation of correctly charged Gln-tRNA(Gln) through the transamidation of misacylated Glu-tRNA(Gln) in organisms which lack glutaminyl-tRNA synthetase. The reaction takes place in the presence of glutamine and ATP through an activated gamma-phospho-Glu-tRNA(Gln). This chain is Glutamyl-tRNA(Gln) amidotransferase subunit A, found in Methanococcus maripaludis (strain DSM 14266 / JCM 13030 / NBRC 101832 / S2 / LL).